Here is a 372-residue protein sequence, read N- to C-terminus: MNSGIDLQGSFIETLQSFGLSHEIAKTIWLPLPLLLMIIGATVGVLVVVWLERKISAAAQQRVGPEYAGPLGVLQPVADGLKLVFKEDVVPAKTDPWLFTLGPALVVIPVFLSYLIVPFGQNLVITDLNVGIFLWISLSSIAPIGLLMSGYSSNNKYALLGGLRAAAQSISYEIPLALAVLAIAMMSNSLSTIDIVEQQSGYGILGWNIWRQPVGFLIFWIAALAECERLPFDLPEAEEELVAGYQTEYAGMKFGLFYVGSYVNLVLSALIVSILYLGGWEFPIPLDKLAGWLNVAPSTPWLQVITASLGIIMTLVKTYALVFIAVLLRWTLPRVRIDQLLNFGWKFLLPVALVNLLLTAALKLAFPIAFGG.

8 consecutive transmembrane segments (helical) span residues 28 to 48 (IWLPLPLLLMIIGATVGVLVV), 97 to 117 (WLFTLGPALVVIPVFLSYLIV), 130 to 150 (VGIFLWISLSSIAPIGLLMSG), 176 to 196 (LALAVLAIAMMSNSLSTIDIV), 204 to 224 (ILGWNIWRQPVGFLIFWIAAL), 265 to 285 (LVLSALIVSILYLGGWEFPIP), 308 to 328 (SLGIIMTLVKTYALVFIAVLL), and 351 to 371 (VALVNLLLTAALKLAFPIAFG).

Belongs to the complex I subunit 1 family. In terms of assembly, NDH-1 is composed of at least 11 different subunits.

It localises to the cellular thylakoid membrane. The catalysed reaction is a plastoquinone + NADH + (n+1) H(+)(in) = a plastoquinol + NAD(+) + n H(+)(out). It carries out the reaction a plastoquinone + NADPH + (n+1) H(+)(in) = a plastoquinol + NADP(+) + n H(+)(out). In terms of biological role, NDH-1 shuttles electrons from an unknown electron donor, via FMN and iron-sulfur (Fe-S) centers, to quinones in the respiratory and/or the photosynthetic chain. The immediate electron acceptor for the enzyme in this species is believed to be plastoquinone. Couples the redox reaction to proton translocation, and thus conserves the redox energy in a proton gradient. This Picosynechococcus sp. (strain ATCC 27264 / PCC 7002 / PR-6) (Agmenellum quadruplicatum) protein is NAD(P)H-quinone oxidoreductase subunit 1.